A 218-amino-acid polypeptide reads, in one-letter code: Histone H1 (218 aa).

Residues 1–19 (MSETAPVAAPAVSAPGAKA) are compositionally biased toward low complexity. 2 disordered regions span residues 1–42 (MSET…PSVT) and 89–218 (VSKG…TKKK). At Ser-2 the chain carries N-acetylserine. In terms of domain architecture, H15 spans 37-110 (AGPSVTELIT…GASGSFKLNK (74 aa)). 4 stretches are compositionally biased toward basic residues: residues 118–133 (KATKKKPAAKPKKPAA), 141–158 (KKPKKAAAVKKSPKKAKK), 166–184 (KAAKSPKKATKAGRPKKTA), and 191–218 (KAVKPKAAKSKAAKPKAAKAKKAATKKK).

The protein belongs to the histone H1/H5 family.

It localises to the nucleus. The protein localises to the chromosome. In terms of biological role, histones H1 are necessary for the condensation of nucleosome chains into higher-order structures. This Gallus gallus (Chicken) protein is Histone H1.